The primary structure comprises 336 residues: Heme A synthase (336 aa).

The next 5 helical transmembrane spans lie at 5-25, 92-112, 117-137, 153-173, and 191-211; these read LTRWLLTCCIMVVAMIIVGGI, GRATGLIYILPLIYFYFKGII, ILSYIIVLLLFCVQGFMGWYM, LAFHLIIAVIIYHLLFYKLVK, and LIFSVAAIAMIYVQIFLGALV. His-255 is a binding site for heme. A run of 3 helical transmembrane segments spans residues 257-277, 284-304, and 307-327; these read LGAYSLSIIVIALIISLLKVK, VAFYLSIALLIQLSTGVITLL, and VPIIAASMHQFFAIVLLSVVI. His-315 contributes to the heme binding site.

It belongs to the COX15/CtaA family. Type 2 subfamily. In terms of assembly, interacts with CtaB. Heme b is required as a cofactor.

It is found in the cell membrane. It carries out the reaction Fe(II)-heme o + 2 A + H2O = Fe(II)-heme a + 2 AH2. It participates in porphyrin-containing compound metabolism; heme A biosynthesis; heme A from heme O: step 1/1. In terms of biological role, catalyzes the conversion of heme O to heme A by two successive hydroxylations of the methyl group at C8. The first hydroxylation forms heme I, the second hydroxylation results in an unstable dihydroxymethyl group, which spontaneously dehydrates, resulting in the formyl group of heme A. The sequence is that of Heme A synthase from Rickettsia bellii (strain OSU 85-389).